Reading from the N-terminus, the 223-residue chain is uncharacterized protein (223 aa).

Positions 5–116 (RILIVEDDVM…ELLLRMRNML (112 aa)) constitute a Response regulatory domain. A 4-aspartylphosphate modification is found at aspartate 52. A DNA-binding region (ompR/PhoB-type) is located at residues 121–219 (GTFTQIKHLY…IYGEGYRLNT (99 aa)).

In terms of processing, phosphorylated by YbdK.

It localises to the cytoplasm. Its function is as follows. Member of the two-component regulatory system YbdK/YbdJ. This is an uncharacterized protein from Bacillus subtilis (strain 168).